Consider the following 1151-residue polypeptide: Protein kinase C-like 1 (1151 aa).

REM-1 domains follow at residues 1–67 (MSFS…KTAQ) and 106–183 (KYDC…INVD). Residues 64–88 (KTAQQSQGENGSEDNERCNSKEYGF) form a disordered region. Residues 190-309 (QPNDIMDNQQ…IRKKKAGQTN (120 aa)) form the C2 domain. The residue at position 226 (S226) is a Phosphoserine. Residues 306–331 (GQTNEQQGWVNASNINGGSSLASEEG) form a disordered region. 2 consecutive Phorbol-ester/DAG-type zinc fingers follow at residues 414–461 (GHHF…VTKC) and 481–531 (PHRF…PDFC). Disordered stretches follow at residues 546–620 (QDTK…IIDK) and 649–669 (AQQTAEFSSPEKTLDPTSNRR). Positions 560–577 (PSAQLGSSIGTANGSDLS) are enriched in polar residues. A compositionally biased stretch (basic and acidic residues) spans 605–620 (VGRDSPTKQHDPIIDK). Residue S761 is modified to Phosphoserine. Residues 782-816 (LAPTSTHASRTTDQQSPQKSQTSTSAKHKKRAAKR) are disordered. Over residues 792–806 (TTDQQSPQKSQTSTS) the composition is skewed to low complexity. Positions 807-816 (AKHKKRAAKR) are enriched in basic residues. The Protein kinase domain occupies 824–1083 (FVLLKVLGKG…ADEVMEEPFF (260 aa)). ATP is bound by residues 830 to 838 (LGKGNFGKV) and K853. The Proton acceptor role is filled by D949. The 68-residue stretch at 1084–1151 (RNINFDDILN…FSFMPDDLDL (68 aa)) folds into the AGC-kinase C-terminal domain.

This sequence belongs to the protein kinase superfamily. AGC Ser/Thr protein kinase family. PKC subfamily.

It catalyses the reaction L-seryl-[protein] + ATP = O-phospho-L-seryl-[protein] + ADP + H(+). The catalysed reaction is L-threonyl-[protein] + ATP = O-phospho-L-threonyl-[protein] + ADP + H(+). Functionally, required for cell growth and for the G2-&gt;M transition of the cell division cycle. Mediates a protein kinase cascade; it activates BCK1 which itself activates MKK1/MKK2. This Saccharomyces cerevisiae (strain ATCC 204508 / S288c) (Baker's yeast) protein is Protein kinase C-like 1 (PKC1).